A 374-amino-acid chain; its full sequence is Inner membrane transport permease YhhJ (374 aa).

The Cytoplasmic segment spans residues 1-22; that stretch reads MRHLRNIFNLGIKELRSLLGDK. A helical membrane pass occupies residues 23 to 43; the sequence is AMLTLIVFSFTVSVYSSATVT. Over 44-172 the chain is Periplasmic; it reads PGSLNLAPIA…TRMRFNPNLD (129 aa). One can recognise an ABC transmembrane type-2 domain in the interval 133 to 369; that stretch reads NGYIQNIING…TIALLRFRKT (237 aa). Residues 173–193 traverse the membrane as a helical segment; the sequence is PAWFGGVMAIINNITMLAIVL. Residues 194–229 lie on the Cytoplasmic side of the membrane; it reads TGSALIREREHGTVEHLLVMPITPFEIMMAKIWSMG. The helical transmembrane segment at 230-250 threads the bilayer; that stretch reads LVVLVVSGLSLVLMVKGVLGV. Topologically, residues 251-255 are periplasmic; it reads PIEGS. Residues 256–276 form a helical membrane-spanning segment; sequence IPLFMLGVALSLFATTSIGIF. The Cytoplasmic portion of the chain corresponds to 277 to 283; it reads MGTIARS. A helical membrane pass occupies residues 284–304; the sequence is MPQLGLLVILVLLPLQMLSGG. Topologically, residues 305–342 are periplasmic; the sequence is STPRESMPQMVQDIMLTMPTTHFVSLAQAILYRGAGFE. A helical membrane pass occupies residues 343 to 363; the sequence is IVWPQFLTLMAIGGAFFTIAL. The Cytoplasmic portion of the chain corresponds to 364 to 374; sequence LRFRKTIGTMA.

The protein belongs to the ABC-2 integral membrane protein family.

Its subcellular location is the cell inner membrane. In Escherichia coli (strain K12), this protein is Inner membrane transport permease YhhJ (yhhJ).